The primary structure comprises 102 residues: Apolipoprotein A-II (102 aa).

The first 18 residues, M1 to G18, serve as a signal peptide directing secretion. Methionine sulfoxide is present on M49.

Belongs to the apolipoprotein A2 family. In terms of assembly, monomer. Interacts with NAXE and NDRG1. In terms of tissue distribution, plasma.

Its subcellular location is the secreted. May stabilize HDL (high density lipoprotein) structure by its association with lipids, and affect the HDL metabolism. The sequence is that of Apolipoprotein A-II (Apoa2) from Rattus norvegicus (Rat).